Consider the following 307-residue polypeptide: tRNA dimethylallyltransferase (307 aa).

An ATP-binding site is contributed by 6-13 (GATATGKT). 8–13 (TATGKT) provides a ligand contact to substrate. An interaction with substrate tRNA region spans residues 31–34 (DSMM).

The protein belongs to the IPP transferase family. In terms of assembly, monomer. It depends on Mg(2+) as a cofactor.

The catalysed reaction is adenosine(37) in tRNA + dimethylallyl diphosphate = N(6)-dimethylallyladenosine(37) in tRNA + diphosphate. Functionally, catalyzes the transfer of a dimethylallyl group onto the adenine at position 37 in tRNAs that read codons beginning with uridine, leading to the formation of N6-(dimethylallyl)adenosine (i(6)A). The polypeptide is tRNA dimethylallyltransferase (Sulfurihydrogenibium sp. (strain YO3AOP1)).